The chain runs to 385 residues: A-type ATP synthase subunit C (385 aa).

Belongs to the V-ATPase V0D/AC39 subunit family. As to quaternary structure, has multiple subunits with at least A(3), B(3), C, D, E, F, H, I and proteolipid K(x).

The protein localises to the cell membrane. Functionally, component of the A-type ATP synthase that produces ATP from ADP in the presence of a proton gradient across the membrane. This chain is A-type ATP synthase subunit C, found in Methanothermobacter thermautotrophicus (strain ATCC 29096 / DSM 1053 / JCM 10044 / NBRC 100330 / Delta H) (Methanobacterium thermoautotrophicum).